A 322-amino-acid polypeptide reads, in one-letter code: Beta-ketoacyl-[acyl-carrier-protein] synthase III (322 aa).

Residues Cys113 and His249 contribute to the active site. The interval 250–254 (QANLR) is ACP-binding. Asn279 is an active-site residue.

This sequence belongs to the thiolase-like superfamily. FabH family. Homodimer.

The protein localises to the cytoplasm. It carries out the reaction malonyl-[ACP] + acetyl-CoA + H(+) = 3-oxobutanoyl-[ACP] + CO2 + CoA. It functions in the pathway lipid metabolism; fatty acid biosynthesis. Functionally, catalyzes the condensation reaction of fatty acid synthesis by the addition to an acyl acceptor of two carbons from malonyl-ACP. Catalyzes the first condensation reaction which initiates fatty acid synthesis and may therefore play a role in governing the total rate of fatty acid production. Possesses both acetoacetyl-ACP synthase and acetyl transacylase activities. Its substrate specificity determines the biosynthesis of branched-chain and/or straight-chain of fatty acids. The protein is Beta-ketoacyl-[acyl-carrier-protein] synthase III of Marinobacter nauticus (strain ATCC 700491 / DSM 11845 / VT8) (Marinobacter aquaeolei).